The sequence spans 209 residues: Urease accessory protein UreG (209 aa).

10-17 (GPVGSGKT) contacts GTP.

Belongs to the SIMIBI class G3E GTPase family. UreG subfamily. Homodimer. UreD, UreF and UreG form a complex that acts as a GTP-hydrolysis-dependent molecular chaperone, activating the urease apoprotein by helping to assemble the nickel containing metallocenter of UreC. The UreE protein probably delivers the nickel.

The protein localises to the cytoplasm. Its function is as follows. Facilitates the functional incorporation of the urease nickel metallocenter. This process requires GTP hydrolysis, probably effectuated by UreG. This chain is Urease accessory protein UreG, found in Lysinibacillus sphaericus (strain C3-41).